We begin with the raw amino-acid sequence, 729 residues long: Cytoplasmic polyadenylation element-binding protein 4 (729 aa).

2 disordered regions span residues 20 to 49 and 78 to 133; these read FPVR…NNNT and EKAK…KEKI. Residues 24-35 are compositionally biased toward basic residues; sequence FHPHLQPPHHHQ. A compositionally biased stretch (low complexity) spans 83–96; sequence QQQEQQDPLEKQQL. 3 positions are modified to phosphoserine: S97, S99, and S137. The interval 218–328 is disordered; it reads FGGSFSPQIG…RGLNGGITPL (111 aa). A compositionally biased stretch (basic residues) spans 232–249; the sequence is HHPHHPHFQHHHSQHQQQ. S252 and S255 each carry phosphoserine. Residues 285–300 show a composition bias toward low complexity; it reads WSSYQSPSPTPSSSWS. The span at 301 to 313 shows a compositional bias: gly residues; sequence PGGGGYGGWGGSQ. T326 carries the post-translational modification Phosphothreonine. Phosphoserine occurs at positions 330 and 332. 2 RRM domains span residues 472-563 and 580-662; these read RKVF…PWNL and KTIF…PYVL. Positions 541 to 543 are RNA-binding; the sequence is KLY. C667, C675, C684, C689, C694, C697, H702, and H710 together coordinate Zn(2+).

Belongs to the RRM CPEB family. As to quaternary structure, interacts with TOB1. As to expression, expressed in pancreas in islets and ductal cells (at protein level). Expressed in melanocytes.

The protein resides in the cytoplasm. It is found in the cell projection. Its subcellular location is the dendrite. The protein localises to the dendritic spine. It localises to the postsynaptic density. The protein resides in the axon. It is found in the growth cone. Its subcellular location is the endoplasmic reticulum. The protein localises to the perinuclear region. Functionally, sequence-specific RNA-binding protein that binds to the cytoplasmic polyadenylation element (CPE), an uridine-rich sequence element (consensus sequence 5'-UUUUUAU-3') within the mRNA 3'-UTR. RNA binding results in a clear conformational change analogous to the Venus fly trap mechanism. Regulates activation of unfolded protein response (UPR) in the process of adaptation to ER stress in liver, by maintaining translation of CPE-regulated mRNAs in conditions in which global protein synthesis is inhibited. Required for cell cycle progression, specifically for cytokinesis and chromosomal segregation. Plays a role as an oncogene promoting tumor growth and progression by positively regulating translation of t-plasminogen activator/PLAT. Stimulates proliferation of melanocytes. In contrast to CPEB1 and CPEB3, does not play role in synaptic plasticity, learning and memory. This Homo sapiens (Human) protein is Cytoplasmic polyadenylation element-binding protein 4 (CPEB4).